Here is a 148-residue protein sequence, read N- to C-terminus: Ferredoxin-thioredoxin reductase catalytic chain, chloroplastic (148 aa).

The N-terminal 35 residues, 1–35 (MKALQASTSYSFFSKSSSATLQRRTHRPQCVILSK), are a transit peptide targeting the chloroplast. Cys87 is a binding site for [4Fe-4S] cluster. The Nucleophile role is filled by Cys89. Cys89 and Cys119 form a disulfide bridge. [4Fe-4S] cluster is bound by residues Cys106, Cys108, and Cys117.

It belongs to the ferredoxin thioredoxin reductase beta subunit family. Heterodimer of subunit A (variable subunit) and subunit B (catalytic subunit). Heterodimeric FTR forms a complex with ferredoxin and thioredoxin. Requires [4Fe-4S] cluster as cofactor.

The protein resides in the plastid. It localises to the chloroplast. It carries out the reaction [thioredoxin]-disulfide + 2 reduced [2Fe-2S]-[ferredoxin] + 2 H(+) = [thioredoxin]-dithiol + 2 oxidized [2Fe-2S]-[ferredoxin]. In terms of biological role, catalytic subunit of the ferredoxin-thioredoxin reductase (FTR), which catalyzes the two-electron reduction of thioredoxins by the electrons provided by reduced ferredoxin. The chain is Ferredoxin-thioredoxin reductase catalytic chain, chloroplastic from Spinacia oleracea (Spinach).